Reading from the N-terminus, the 127-residue chain is Protein B20 (127 aa).

The tract at residues aspartate 86 to leucine 127 is disordered. The segment covering glutamate 108–glutamine 118 has biased composition (acidic residues).

This Homo sapiens (Human) protein is Protein B20.